We begin with the raw amino-acid sequence, 686 residues long: Chondroitin proteoglycan 1 (686 aa).

The N-terminal stretch at Met1 to Ala18 is a signal peptide. An N-linked (GlcNAc...) asparagine glycan is attached at Asn46. In terms of domain architecture, Chitin-binding type-2 1 spans Asp63–Gly120. Cys96 and Cys109 are oxidised to a cystine. The N-linked (GlcNAc...) asparagine glycan is linked to Asn143. A Chitin-binding type-2 2 domain is found at Asp228–Asn285. Cys261 and Cys274 are oxidised to a cystine. The segment at Gln284–Gly312 is disordered. Residues Asn285, Asn635, and Asn664 are each glycosylated (N-linked (GlcNAc...) asparagine). The segment at Lys658–His686 is disordered.

Its function is as follows. Required for polar body extrusion during cytokinesis in embryo development. Affects cortical granule size. Shown to have roles in meiotic chromosome segregation, osmotic barrier function and polarization in conjunction with cpg-2. Binds chitin. This chain is Chondroitin proteoglycan 1 (cpg-1), found in Caenorhabditis briggsae.